The chain runs to 131 residues: MRHYEIVFMVHPDQSEQVPGMIERYTGVITEANGKIHRLEDWGRRQLAYPIQDLHKAHYVLMNVEAPAETIEELETAFRFNDAVLRNMVMRTKVAVTEASPMAKAKDERDSRRGPAGDRSYDEANAEEIAE.

The segment at 96-131 (VTEASPMAKAKDERDSRRGPAGDRSYDEANAEEIAE) is disordered. Over residues 104–122 (KAKDERDSRRGPAGDRSYD) the composition is skewed to basic and acidic residues.

It belongs to the bacterial ribosomal protein bS6 family.

In terms of biological role, binds together with bS18 to 16S ribosomal RNA. The chain is Small ribosomal subunit protein bS6 from Shewanella sp. (strain MR-4).